The following is a 125-amino-acid chain: Small ribosomal subunit protein bS6 (125 aa).

The segment at 99–125 is disordered; the sequence is ASPMVKAREERKPLTEVENNDFEDAEE. A compositionally biased stretch (basic and acidic residues) spans 104–113; the sequence is KAREERKPLT. Residues 116 to 125 show a composition bias toward acidic residues; sequence ENNDFEDAEE.

Belongs to the bacterial ribosomal protein bS6 family.

Its function is as follows. Binds together with bS18 to 16S ribosomal RNA. This Histophilus somni (strain 2336) (Haemophilus somnus) protein is Small ribosomal subunit protein bS6.